A 278-amino-acid polypeptide reads, in one-letter code: Formamidopyrimidine-DNA glycosylase (278 aa).

The active-site Schiff-base intermediate with DNA is the Pro-2. Glu-3 acts as the Proton donor in catalysis. Lys-58 serves as the catalytic Proton donor; for beta-elimination activity. DNA is bound by residues His-91, Arg-109, and Arg-158. An FPG-type zinc finger spans residues 243–277 (KVYDRKGLPCKVCKTPISQMVQGQRTTYFCSQCQK). The active-site Proton donor; for delta-elimination activity is the Arg-267.

This sequence belongs to the FPG family. In terms of assembly, monomer. Requires Zn(2+) as cofactor.

The catalysed reaction is Hydrolysis of DNA containing ring-opened 7-methylguanine residues, releasing 2,6-diamino-4-hydroxy-5-(N-methyl)formamidopyrimidine.. It catalyses the reaction 2'-deoxyribonucleotide-(2'-deoxyribose 5'-phosphate)-2'-deoxyribonucleotide-DNA = a 3'-end 2'-deoxyribonucleotide-(2,3-dehydro-2,3-deoxyribose 5'-phosphate)-DNA + a 5'-end 5'-phospho-2'-deoxyribonucleoside-DNA + H(+). Its function is as follows. Involved in base excision repair of DNA damaged by oxidation or by mutagenic agents. Acts as a DNA glycosylase that recognizes and removes damaged bases. Has a preference for oxidized purines, such as 7,8-dihydro-8-oxoguanine (8-oxoG). Has AP (apurinic/apyrimidinic) lyase activity and introduces nicks in the DNA strand. Cleaves the DNA backbone by beta-delta elimination to generate a single-strand break at the site of the removed base with both 3'- and 5'-phosphates. The polypeptide is Formamidopyrimidine-DNA glycosylase (Polynucleobacter necessarius subsp. necessarius (strain STIR1)).